The primary structure comprises 231 residues: mRNA-decapping enzyme subunit 1 (231 aa).

The interval 92–120 (QNGSNNIQVNNGSDNSNRNSSGNGNSYKS) is disordered. Low complexity predominate over residues 101 to 120 (NNGSDNSNRNSSGNGNSYKS).

This sequence belongs to the DCP1 family. As to quaternary structure, component of the decapping complex composed of DCP1 and DCP2. Interacts with mRNAs, DHH1, LSM1, LSM2, LSM3, LSM4, LSM5, LSM6, LSM7, and the cap-binding proteins PAB1 and TIF4632/eIF-4G. Phosphorylated.

It is found in the cytoplasm. The protein resides in the P-body. Component of the decapping complex necessary for the degradation of mRNAs, both in normal mRNA turnover and in nonsense-mediated mRNA decay. Removes the 7-methyl guanine cap structure from mRNA molecules, yielding a 5'-phosphorylated mRNA fragment and 7m-GDP. Decapping is the major pathway of mRNA degradation in yeast. It occurs through deadenylation, decapping and subsequent 5' to 3' exonucleolytic decay of the transcript body. DCP1 is activated by the DEAD-box helicase DHH1 and destabilizes the eIF-4F cap-binding complex from the mRNA. This is mRNA-decapping enzyme subunit 1 (DCP1) from Saccharomyces cerevisiae (strain ATCC 204508 / S288c) (Baker's yeast).